Here is a 337-residue protein sequence, read N- to C-terminus: Biotin synthase (337 aa).

The 230-residue stretch at 52-281 folds into the Radical SAM core domain; that stretch reads ADIQRASLLS…RSRVRLSAGR (230 aa). Residues Cys-67, Cys-71, and Cys-74 each contribute to the [4Fe-4S] cluster site. Residues Cys-112, Cys-144, Cys-204, and Arg-276 each contribute to the [2Fe-2S] cluster site.

The protein belongs to the radical SAM superfamily. Biotin synthase family. As to quaternary structure, homodimer. [4Fe-4S] cluster is required as a cofactor. [2Fe-2S] cluster serves as cofactor.

It catalyses the reaction (4R,5S)-dethiobiotin + (sulfur carrier)-SH + 2 reduced [2Fe-2S]-[ferredoxin] + 2 S-adenosyl-L-methionine = (sulfur carrier)-H + biotin + 2 5'-deoxyadenosine + 2 L-methionine + 2 oxidized [2Fe-2S]-[ferredoxin]. Its pathway is cofactor biosynthesis; biotin biosynthesis; biotin from 7,8-diaminononanoate: step 2/2. Functionally, catalyzes the conversion of dethiobiotin (DTB) to biotin by the insertion of a sulfur atom into dethiobiotin via a radical-based mechanism. The sequence is that of Biotin synthase from Methylobacterium radiotolerans (strain ATCC 27329 / DSM 1819 / JCM 2831 / NBRC 15690 / NCIMB 10815 / 0-1).